A 294-amino-acid chain; its full sequence is 33 kDa chaperonin (294 aa).

2 disulfide bridges follow: Cys-231-Cys-233 and Cys-264-Cys-267.

The protein belongs to the HSP33 family. In terms of processing, under oxidizing conditions two disulfide bonds are formed involving the reactive cysteines. Under reducing conditions zinc is bound to the reactive cysteines and the protein is inactive.

The protein localises to the cytoplasm. Redox regulated molecular chaperone. Protects both thermally unfolding and oxidatively damaged proteins from irreversible aggregation. Plays an important role in the bacterial defense system toward oxidative stress. The chain is 33 kDa chaperonin from Aeromonas salmonicida (strain A449).